Here is a 459-residue protein sequence, read N- to C-terminus: Putrescine aminotransferase (459 aa).

Pyridoxal 5'-phosphate-binding positions include Gly150–Thr151 and Gln274. Residue Lys300 is modified to N6-(pyridoxal phosphate)lysine. A pyridoxal 5'-phosphate-binding site is contributed by Thr332.

This sequence belongs to the class-III pyridoxal-phosphate-dependent aminotransferase family. Putrescine aminotransferase subfamily. Pyridoxal 5'-phosphate is required as a cofactor.

The enzyme catalyses an alkane-alpha,omega-diamine + 2-oxoglutarate = an omega-aminoaldehyde + L-glutamate. It catalyses the reaction putrescine + 2-oxoglutarate = 1-pyrroline + L-glutamate + H2O. The catalysed reaction is cadaverine + 2-oxoglutarate = 5-aminopentanal + L-glutamate. It functions in the pathway amine and polyamine degradation; putrescine degradation; 4-aminobutanal from putrescine (transaminase route): step 1/1. Functionally, catalyzes the aminotransferase reaction from putrescine to 2-oxoglutarate, leading to glutamate and 4-aminobutanal, which spontaneously cyclizes to form 1-pyrroline. This is the first step in one of two pathways for putrescine degradation, where putrescine is converted into 4-aminobutanoate (gamma-aminobutyrate or GABA) via 4-aminobutanal. Also functions as a cadaverine transaminase in a a L-lysine degradation pathway to succinate that proceeds via cadaverine, glutarate and L-2-hydroxyglutarate. In Escherichia coli O7:K1 (strain IAI39 / ExPEC), this protein is Putrescine aminotransferase.